The primary structure comprises 164 residues: Peptidyl-prolyl cis-trans isomerase A (164 aa).

Position 1 is an N-acetylmethionine (methionine 1). The residue at position 2 (valine 2) is an N-acetylvaline; in Peptidyl-prolyl cis-trans isomerase A, N-terminally processed. One can recognise a PPIase cyclophilin-type domain in the interval 7–163 (FFDIAVDGEP…KKITIADCGQ (157 aa)). At lysine 28 the chain carries N6-acetyllysine; alternate. A Glycyl lysine isopeptide (Lys-Gly) (interchain with G-Cter in SUMO2); alternate cross-link involves residue lysine 28. Lysine 28 is covalently cross-linked (Glycyl lysine isopeptide (Lys-Gly) (interchain with G-Cter in ubiquitin); alternate). N6-acetyllysine occurs at positions 44 and 76. Serine 77 is modified (phosphoserine). Lysine 82 is modified (N6-acetyllysine; alternate). Residue lysine 82 forms a Glycyl lysine isopeptide (Lys-Gly) (interchain with G-Cter in SUMO2); alternate linkage. The residue at position 93 (threonine 93) is a Phosphothreonine. A glycan (N-linked (GlcNAc...) asparagine) is linked at asparagine 108. N6-acetyllysine is present on residues lysine 125, lysine 131, and lysine 133.

It belongs to the cyclophilin-type PPIase family. PPIase A subfamily. As to quaternary structure, interacts with protein phosphatase PPP3CA/calcineurin A. Interacts with isoform 2 of BSG/CD147. Interacts with FOXO1; the interaction promotes FOXO1 dephosphorylation, nuclear accumulation and transcriptional activity. Interacts with integrin ITGA2B:ITGB3; the interaction is ROS and peptidyl-prolyl cis-trans isomerase (PPIase) activity-dependent and is increased in the presence of thrombin. Interacts with MAP3K5. Interacts with TARDBP; the interaction is dependent on the RNA-binding activity of TARDBP and the PPIase activity of PPIA/CYPA and the acetylation of PPIA/CYPA at Lys-125 favors the interaction. Interacts with HNRNPA1, HNRNPA2B1, HNRNPC, RBMX, HNRNPK and HNRNPM. Acetylation at Lys-125 markedly inhibits catalysis of cis to trans isomerization. PPIA acetylation also antagonizes the immunosuppressive effects of cyclosporine by inhibiting the sequential steps of cyclosporine binding and calcineurin inhibition. Acetylation at Lys-125 favors the interaction with TARDBP.

Its subcellular location is the cytoplasm. It localises to the secreted. It is found in the nucleus. The catalysed reaction is [protein]-peptidylproline (omega=180) = [protein]-peptidylproline (omega=0). Binds cyclosporin A (CsA). CsA mediates some of its effects via an inhibitory action on PPIase. Catalyzes the cis-trans isomerization of proline imidic peptide bonds in oligopeptides. Exerts a strong chemotactic effect on leukocytes partly through activation of one of its membrane receptors BSG/CD147, initiating a signaling cascade that culminates in MAPK/ERK activation. Activates endothelial cells (ECs) in a proinflammatory manner by stimulating activation of NF-kappa-B and ERK, JNK and p38 MAP-kinases and by inducing expression of adhesion molecules including SELE and VCAM1. Induces apoptosis in ECs by promoting the FOXO1-dependent expression of CCL2 and BCL2L11 which are involved in EC chemotaxis and apoptosis. In response to oxidative stress, initiates proapoptotic and antiapoptotic signaling in ECs via activation of NF-kappa-B and AKT1 and up-regulation of antiapoptotic protein BCL2. Negatively regulates MAP3K5/ASK1 kinase activity, autophosphorylation and oxidative stress-induced apoptosis mediated by MAP3K5/ASK1. Necessary for the assembly of TARDBP in heterogeneous nuclear ribonucleoprotein (hnRNP) complexes and regulates TARDBP binding to RNA UG repeats and TARDBP-dependent expression of HDAC6, ATG7 and VCP which are involved in clearance of protein aggregates. Plays an important role in platelet activation and aggregation. Regulates calcium mobilization and integrin ITGA2B:ITGB3 bidirectional signaling via increased ROS production as well as by facilitating the interaction between integrin and the cell cytoskeleton. Binds heparan sulfate glycosaminoglycans. The protein is Peptidyl-prolyl cis-trans isomerase A (PPIA) of Saguinus oedipus (Cotton-top tamarin).